A 425-amino-acid polypeptide reads, in one-letter code: uncharacterized protein (425 aa).

The 57-residue stretch at 1-57 (MKDKPLKLTVEKLVYGGYGFSRLNGKAVFVRFASPKELVEAKVVKEKKDYTEAVVTK) folds into the TRAM domain. [4Fe-4S] cluster-binding residues include cysteine 70, cysteine 76, cysteine 79, and cysteine 153. 3 residues coordinate S-adenosyl-L-methionine: glutamine 260, aspartate 308, and aspartate 354. Residue cysteine 381 is the Nucleophile of the active site.

It belongs to the class I-like SAM-binding methyltransferase superfamily. RNA M5U methyltransferase family.

This is an uncharacterized protein from Aquifex aeolicus (strain VF5).